Here is a 294-residue protein sequence, read N- to C-terminus: Diphthine synthase (294 aa).

Residues Asp-93, Val-96, 121 to 122 (SG), Leu-173, and Ala-220 contribute to the S-adenosyl-L-methionine site.

Belongs to the diphthine synthase family. Homodimer.

The catalysed reaction is 2-[(3S)-amino-3-carboxypropyl]-L-histidyl-[translation elongation factor 2] + 3 S-adenosyl-L-methionine = diphthine-[translation elongation factor 2] + 3 S-adenosyl-L-homocysteine + 3 H(+). Its pathway is protein modification; peptidyl-diphthamide biosynthesis. Its function is as follows. S-adenosyl-L-methionine-dependent methyltransferase that catalyzes the trimethylation of the amino group of the modified target histidine residue in translation elongation factor 2 (EF-2), to form an intermediate called diphthine. The three successive methylation reactions represent the second step of diphthamide biosynthesis. This Aeropyrum pernix (strain ATCC 700893 / DSM 11879 / JCM 9820 / NBRC 100138 / K1) protein is Diphthine synthase (dphB).